A 392-amino-acid polypeptide reads, in one-letter code: 5-amino-6-(D-ribitylamino)uracil--L-tyrosine 4-hydroxyphenyl transferase (392 aa).

The 248-residue stretch at 60 to 307 (VTYVVNRNIN…MAIARLYLGK (248 aa)) folds into the Radical SAM core domain. [4Fe-4S] cluster is bound by residues cysteine 74, cysteine 78, and cysteine 81.

This sequence belongs to the radical SAM superfamily. CofH family. In terms of assembly, consists of two subunits, CofG and CofH. [4Fe-4S] cluster serves as cofactor.

The enzyme catalyses 5-amino-6-(D-ribitylamino)uracil + L-tyrosine + S-adenosyl-L-methionine = 5-amino-5-(4-hydroxybenzyl)-6-(D-ribitylimino)-5,6-dihydrouracil + 2-iminoacetate + 5'-deoxyadenosine + L-methionine + H(+). It functions in the pathway cofactor biosynthesis; coenzyme F0 biosynthesis. Functionally, catalyzes the radical-mediated synthesis of 5-amino-5-(4-hydroxybenzyl)-6-(D-ribitylimino)-5,6-dihydrouracil from 5-amino-6-(D-ribitylamino)uracil and L-tyrosine. The sequence is that of 5-amino-6-(D-ribitylamino)uracil--L-tyrosine 4-hydroxyphenyl transferase from Synechocystis sp. (strain ATCC 27184 / PCC 6803 / Kazusa).